Consider the following 208-residue polypeptide: Guanylate kinase (208 aa).

One can recognise a Guanylate kinase-like domain in the interval 8 to 187 (GVCLVISAPS…AISQARSVLT (180 aa)). Residue 15-22 (APSGAGKS) participates in ATP binding.

This sequence belongs to the guanylate kinase family.

The protein localises to the cytoplasm. The catalysed reaction is GMP + ATP = GDP + ADP. Functionally, essential for recycling GMP and indirectly, cGMP. This is Guanylate kinase from Gluconobacter oxydans (strain 621H) (Gluconobacter suboxydans).